A 692-amino-acid polypeptide reads, in one-letter code: Aspartate--tRNA ligase, mitochondrial (692 aa).

Residues 1 to 61 (MNRVILKDSK…RNFTNTINNN (61 aa)) constitute a mitochondrion transit peptide. E264 is a binding site for L-aspartate. The interval 287-290 (QQYK) is aspartate. Position 309 (R309) interacts with L-aspartate. ATP-binding positions include 309–311 (RDE) and E590. An L-aspartate-binding site is contributed by R597. An ATP-binding site is contributed by 642 to 645 (GFDR).

This sequence belongs to the class-II aminoacyl-tRNA synthetase family. Type 1 subfamily.

It is found in the mitochondrion matrix. It catalyses the reaction tRNA(Asp) + L-aspartate + ATP = L-aspartyl-tRNA(Asp) + AMP + diphosphate. This is Aspartate--tRNA ligase, mitochondrial (maspS) from Dictyostelium discoideum (Social amoeba).